The sequence spans 368 residues: Dual-specificity RNA methyltransferase RlmN (368 aa).

Glu-94 functions as the Proton acceptor in the catalytic mechanism. The Radical SAM core domain occupies 100–334; sequence EEDRATLCVS…VIVRKTRGDD (235 aa). Cys-107 and Cys-339 are disulfide-bonded. [4Fe-4S] cluster contacts are provided by Cys-114, Cys-118, and Cys-121. S-adenosyl-L-methionine is bound by residues 163-164, Ser-195, 217-219, and Asn-296; these read GE and SLH. Cys-339 (S-methylcysteine intermediate) is an active-site residue.

This sequence belongs to the radical SAM superfamily. RlmN family. The cofactor is [4Fe-4S] cluster.

The protein resides in the cytoplasm. It carries out the reaction adenosine(2503) in 23S rRNA + 2 reduced [2Fe-2S]-[ferredoxin] + 2 S-adenosyl-L-methionine = 2-methyladenosine(2503) in 23S rRNA + 5'-deoxyadenosine + L-methionine + 2 oxidized [2Fe-2S]-[ferredoxin] + S-adenosyl-L-homocysteine. The enzyme catalyses adenosine(37) in tRNA + 2 reduced [2Fe-2S]-[ferredoxin] + 2 S-adenosyl-L-methionine = 2-methyladenosine(37) in tRNA + 5'-deoxyadenosine + L-methionine + 2 oxidized [2Fe-2S]-[ferredoxin] + S-adenosyl-L-homocysteine. In terms of biological role, specifically methylates position 2 of adenine 2503 in 23S rRNA and position 2 of adenine 37 in tRNAs. m2A2503 modification seems to play a crucial role in the proofreading step occurring at the peptidyl transferase center and thus would serve to optimize ribosomal fidelity. The sequence is that of Dual-specificity RNA methyltransferase RlmN from Aeromonas salmonicida (strain A449).